Consider the following 204-residue polypeptide: Cytochrome c biogenesis ATP-binding export protein CcmA (204 aa).

The region spanning Leu2–Leu202 is the ABC transporter domain. ATP is bound at residue Gly34–Thr41.

It belongs to the ABC transporter superfamily. CcmA exporter (TC 3.A.1.107) family. In terms of assembly, the complex is composed of two ATP-binding proteins (CcmA) and two transmembrane proteins (CcmB).

Its subcellular location is the cell inner membrane. It carries out the reaction heme b(in) + ATP + H2O = heme b(out) + ADP + phosphate + H(+). Part of the ABC transporter complex CcmAB involved in the biogenesis of c-type cytochromes; once thought to export heme, this seems not to be the case, but its exact role is uncertain. Responsible for energy coupling to the transport system. The polypeptide is Cytochrome c biogenesis ATP-binding export protein CcmA (Aliivibrio fischeri (strain ATCC 700601 / ES114) (Vibrio fischeri)).